The primary structure comprises 509 residues: ATP synthase subunit alpha (509 aa).

169–176 (GDRQTGKT) provides a ligand contact to ATP.

Belongs to the ATPase alpha/beta chains family. F-type ATPases have 2 components, CF(1) - the catalytic core - and CF(0) - the membrane proton channel. CF(1) has five subunits: alpha(3), beta(3), gamma(1), delta(1), epsilon(1). CF(0) has three main subunits: a(1), b(2) and c(9-12). The alpha and beta chains form an alternating ring which encloses part of the gamma chain. CF(1) is attached to CF(0) by a central stalk formed by the gamma and epsilon chains, while a peripheral stalk is formed by the delta and b chains.

Its subcellular location is the cell inner membrane. The enzyme catalyses ATP + H2O + 4 H(+)(in) = ADP + phosphate + 5 H(+)(out). Functionally, produces ATP from ADP in the presence of a proton gradient across the membrane. The alpha chain is a regulatory subunit. The protein is ATP synthase subunit alpha of Xanthobacter autotrophicus (strain ATCC BAA-1158 / Py2).